The following is a 500-amino-acid chain: Probable trehalose-phosphate phosphatase 8 (500 aa).

It belongs to the trehalose phosphatase family. It depends on a divalent metal cation as a cofactor.

The catalysed reaction is alpha,alpha-trehalose 6-phosphate + H2O = alpha,alpha-trehalose + phosphate. Its pathway is glycan biosynthesis; trehalose biosynthesis. In terms of biological role, removes the phosphate from trehalose 6-phosphate to produce free trehalose. Trehalose accumulation in plant may improve abiotic stress tolerance. The chain is Probable trehalose-phosphate phosphatase 8 (TPP8) from Oryza sativa subsp. japonica (Rice).